A 270-amino-acid polypeptide reads, in one-letter code: MLASRALLAKQAAAMLVRQPACLMHHGGDWGNWGNTNIAVVFSGCGWWDGTDIHEAAYTMYHLSRNGARFQIFAPNQQQMHVMDHMKMQPSSSDNRNMMMESARFSHGQGMMQMNDLSKLDANSFDAVIFPGGHGIVKNMSTFSKDGKDCKLNNDVERVLKDFHRARKPIGLSSMAPLLACRVLPSLEVTMGYERDESSRWGRWPNTNMVQAVKSMGARHNTREPYEAYVDEKNKVISTPTFMWETDYHYHYIFDGIGNMVKHVMRMTAK.

Expressed specifically in the inner segments of cone photoreceptor cells of the retina (at protein level).

The protein localises to the mitochondrion. Its function is as follows. Plays a role in promoting mitochondrial enlargement in cone photoreceptor cells in a fusion-independent and ATP-dependent manner. This chain is ES1 protein, mitochondrial, found in Danio rerio (Zebrafish).